We begin with the raw amino-acid sequence, 128 residues long: Large ribosomal subunit protein bL19 (128 aa).

The protein belongs to the bacterial ribosomal protein bL19 family.

Functionally, this protein is located at the 30S-50S ribosomal subunit interface and may play a role in the structure and function of the aminoacyl-tRNA binding site. The sequence is that of Large ribosomal subunit protein bL19 from Bradyrhizobium sp. (strain ORS 278).